The following is a 297-amino-acid chain: uncharacterized protein (297 aa).

The next 5 membrane-spanning stretches (helical) occupy residues 114–136 (YNRW…LSSG), 150–170 (LLYD…VFNV), 197–217 (MPIV…GVHL), 227–247 (AFTV…KAMI), and 269–289 (FINT…PGLL).

The protein belongs to the ThrE exporter (TC 2.A.79) family.

The protein resides in the cell inner membrane. This is an uncharacterized protein from Haemophilus influenzae (strain ATCC 51907 / DSM 11121 / KW20 / Rd).